The chain runs to 295 residues: Putative nudix hydrolase 7 (295 aa).

Residues 9–182 (SWRSAASIIL…KYALPPPQVY (174 aa)) form the Nudix hydrolase domain. The Nudix box motif lies at 52–73 (TDAKLGDEFRIAAVRELFEESG). Glutamate 67 and glutamate 71 together coordinate Mg(2+).

It belongs to the Nudix hydrolase family. Mg(2+) serves as cofactor. It depends on Mn(2+) as a cofactor.

Probably mediates the hydrolysis of some nucleoside diphosphate derivatives. This Caenorhabditis elegans protein is Putative nudix hydrolase 7 (ndx-7).